Consider the following 88-residue polypeptide: uncharacterized protein (88 aa).

2 helical membrane passes run 27–46 and 61–83; these read LFIF…ETPH and SMCL…LILI.

The protein resides in the membrane. This is an uncharacterized protein from Saccharomyces cerevisiae (strain ATCC 204508 / S288c) (Baker's yeast).